A 2131-amino-acid chain; its full sequence is Protein Ycf2 (2131 aa).

Position 1484–1491 (1484–1491 (GSIGTGRS)) interacts with ATP.

It belongs to the Ycf2 family.

Its subcellular location is the plastid. It is found in the chloroplast stroma. Its function is as follows. Probable ATPase of unknown function. Its presence in a non-photosynthetic plant (Epifagus virginiana) and experiments in tobacco indicate that it has an essential function which is probably not related to photosynthesis. The polypeptide is Protein Ycf2 (ycf2-A) (Spinacia oleracea (Spinach)).